The chain runs to 180 residues: ATP synthase subunit b (180 aa).

A helical membrane pass occupies residues 26 to 48 (SMILFWKAVNTVILLGLVYYFGG).

Belongs to the ATPase B chain family. In terms of assembly, F-type ATPases have 2 components, F(1) - the catalytic core - and F(0) - the membrane proton channel. F(1) has five subunits: alpha(3), beta(3), gamma(1), delta(1), epsilon(1). F(0) has three main subunits: a(1), b(2) and c(10-14). The alpha and beta chains form an alternating ring which encloses part of the gamma chain. F(1) is attached to F(0) by a central stalk formed by the gamma and epsilon chains, while a peripheral stalk is formed by the delta and b chains.

It localises to the cell inner membrane. Its function is as follows. F(1)F(0) ATP synthase produces ATP from ADP in the presence of a proton or sodium gradient. F-type ATPases consist of two structural domains, F(1) containing the extramembraneous catalytic core and F(0) containing the membrane proton channel, linked together by a central stalk and a peripheral stalk. During catalysis, ATP synthesis in the catalytic domain of F(1) is coupled via a rotary mechanism of the central stalk subunits to proton translocation. Component of the F(0) channel, it forms part of the peripheral stalk, linking F(1) to F(0). This Sulfurihydrogenibium sp. (strain YO3AOP1) protein is ATP synthase subunit b.